Reading from the N-terminus, the 56-residue chain is FAPVNVDCSDHPKPACLQEQKPICGSDNKTYDNKCSFCNAVVDSNGTLTLSHFGKC.

A Kazal-like domain is found at Val6–Cys56. Disulfide bonds link Cys8-Cys38, Cys16-Cys35, and Cys24-Cys56. N-linked (GlcNAc...) asparagine glycosylation occurs at Asn45.

The protein localises to the secreted. The chain is Ovomucoid from Ortalis vetula (Plain chachalaca).